Reading from the N-terminus, the 83-residue chain is Small ribosomal subunit protein bS18 (83 aa).

It belongs to the bacterial ribosomal protein bS18 family. Part of the 30S ribosomal subunit. Forms a tight heterodimer with protein bS6.

Its function is as follows. Binds as a heterodimer with protein bS6 to the central domain of the 16S rRNA, where it helps stabilize the platform of the 30S subunit. The sequence is that of Small ribosomal subunit protein bS18 from Methylobacterium sp. (strain 4-46).